Here is a 288-residue protein sequence, read N- to C-terminus: Homoserine kinase (288 aa).

79 to 89 (PPARGLGSSSA) is a binding site for ATP.

It belongs to the GHMP kinase family. Homoserine kinase subfamily.

The protein resides in the cytoplasm. It carries out the reaction L-homoserine + ATP = O-phospho-L-homoserine + ADP + H(+). It participates in amino-acid biosynthesis; L-threonine biosynthesis; L-threonine from L-aspartate: step 4/5. Functionally, catalyzes the ATP-dependent phosphorylation of L-homoserine to L-homoserine phosphate. The polypeptide is Homoserine kinase (Listeria monocytogenes serotype 4b (strain CLIP80459)).